A 1325-amino-acid chain; its full sequence is Cellulose synthase 1 operon protein C (1325 aa).

A signal peptide spans 1 to 30; that stretch reads MNRRYVFSLSAGLLASSCMGAIMPVPVARA. 8 TPR repeats span residues 50–83, 85–117, 292–325, 326–359, 406–439, 558–591, 702–735, and 737–769; these read RQIL…APDA, DVLE…APGS, AGLA…NSHD, ADSL…DPKT, TGAT…DPNN, NDAA…KEDL, MGIA…DPEA, and SPKL…NPQD. Residues 838–886 are disordered; that stretch reads VEGSRSASGPAATEEDALAPPSSNPFRHHGYGRQTELGAPVTGGSYSME.

The protein belongs to the AcsC/BcsC family.

Its subcellular location is the cell outer membrane. It participates in glycan metabolism; bacterial cellulose biosynthesis. Its function is as follows. Required for maximal bacterial cellulose synthesis. It may be involved in the formation of a membrane complex for extrusion of the cellulose product. The sequence is that of Cellulose synthase 1 operon protein C (bcsCI) from Komagataeibacter xylinus (Gluconacetobacter xylinus).